Consider the following 253-residue polypeptide: MEGKIVIVTGASHGIGLATVNLLLAAGASVFGVDLAPTPPSVTSEKFKFLQLNICDKDAPAKIVLGSKDAFGSDRIDALLNVAGISDYFQTALTFEDDVWDSVIDVNLAAQVRLMREVLKVMKVQKSGSIVNVVSKLALSGACGGVAYVASKHALLGVTKNTAWMFKDDGIRCNAVAPGSTDTNIRNTTDATKIDYDAFTRAMPVIGVHCNLQTGEGMMSPEPAAQAIFFLASDLSKGMNGVVIPVDNAWSVI.

Residues 5-25 form a helical membrane-spanning segment; sequence IVIVTGASHGIGLATVNLLLA. Residues V8, R116, Y148, K152, and N184 each contribute to the NADP(+) site. Y148 acts as the Proton acceptor in catalysis. Residue K152 is the Lowers pKa of active site Tyr of the active site. N187 carries an N-linked (GlcNAc...) asparagine glycan.

The protein belongs to the short-chain dehydrogenases/reductases (SDR) family.

The protein resides in the membrane. Its pathway is secondary metabolite biosynthesis; terpenoid biosynthesis. In terms of biological role, short chain dehydrogenase; part of the gene cluster that mediates the biosynthesis of pleuromutilin, a tricyclic diterpene showing antibacterial properties. The geranylgeranyl diphosphate (GGPP) synthase ple4 catalyzes the first step in pleuromutilin biosynthesis. GGPP is then substrate of the premutilin synthase (PS) ple3 to yield premutilin. Premutilin synthase is a bifunctional enzyme composed of the fusion of a class II diterpene cyclase (DTC) and a class I diterpene synthase (DTS), with the corresponding domains and active sites containing characteristic aspartate-rich motifs. GGPP is first converted to mutildienyl-diphosphate (MPP) at the class II DTC site. MPP is subsequently further cyclized at the class I DTS site, followed by a 1,5-hydride shift and addition of water prior to terminating deprotonation, to yield premutilin. The cytochrome P450 monooxygenases ple5 and ple6 hydroxylate premutilin at C-11 and C-3, respectively, producing 11-hydroxypremutilin and 3-hydroxypremutilin. The combination of the actions of both ple5 and ple6 leads to the production of 3,11-dihydroxypremutilin. The short chain dehydrogenase ple7 further converts 3,11-dihydroxypremutilin into mutilin. The acetyltransferase ple2 then acetylates mutilin to produce 14-O-acetylmutilin. Finally, the cytochrome P450 monooxygenase ple1 catalyzes hydroxylation on the alpha position of the acetyl side chain of 14-O-acetylmutilin to yield pleuromutilin. In Rhodocybe pseudopiperita (Clitopilus pseudopiperitus), this protein is Short chain dehydrogenase ple7.